We begin with the raw amino-acid sequence, 260 residues long: 4-hydroxy-tetrahydrodipicolinate reductase (260 aa).

Residue G12–M17 coordinates NAD(+). Residue K40 participates in NADP(+) binding. NAD(+)-binding positions include G92–T94 and A118–F121. H148 serves as the catalytic Proton donor/acceptor. H149 lines the (S)-2,3,4,5-tetrahydrodipicolinate pocket. K152 acts as the Proton donor in catalysis. G158 to T159 provides a ligand contact to (S)-2,3,4,5-tetrahydrodipicolinate.

Belongs to the DapB family.

It is found in the cytoplasm. The catalysed reaction is (S)-2,3,4,5-tetrahydrodipicolinate + NAD(+) + H2O = (2S,4S)-4-hydroxy-2,3,4,5-tetrahydrodipicolinate + NADH + H(+). It catalyses the reaction (S)-2,3,4,5-tetrahydrodipicolinate + NADP(+) + H2O = (2S,4S)-4-hydroxy-2,3,4,5-tetrahydrodipicolinate + NADPH + H(+). The protein operates within amino-acid biosynthesis; L-lysine biosynthesis via DAP pathway; (S)-tetrahydrodipicolinate from L-aspartate: step 4/4. In terms of biological role, catalyzes the conversion of 4-hydroxy-tetrahydrodipicolinate (HTPA) to tetrahydrodipicolinate. The chain is 4-hydroxy-tetrahydrodipicolinate reductase from Lactococcus lactis subsp. lactis (strain IL1403) (Streptococcus lactis).